The primary structure comprises 425 residues: Glutamyl-tRNA reductase (425 aa).

Substrate is bound by residues 49-52 (TCNR), Ser109, 114-116 (EGQ), and Gln120. The Nucleophile role is filled by Cys50. Residue 189–194 (GAGETG) participates in NADP(+) binding.

Belongs to the glutamyl-tRNA reductase family. Homodimer.

The catalysed reaction is (S)-4-amino-5-oxopentanoate + tRNA(Glu) + NADP(+) = L-glutamyl-tRNA(Glu) + NADPH + H(+). It participates in porphyrin-containing compound metabolism; protoporphyrin-IX biosynthesis; 5-aminolevulinate from L-glutamyl-tRNA(Glu): step 1/2. The protein operates within porphyrin-containing compound metabolism; chlorophyll biosynthesis. Its function is as follows. Catalyzes the NADPH-dependent reduction of glutamyl-tRNA(Glu) to glutamate 1-semialdehyde (GSA). The protein is Glutamyl-tRNA reductase of Pelodictyon phaeoclathratiforme (strain DSM 5477 / BU-1).